A 275-amino-acid chain; its full sequence is NH(3)-dependent NAD(+) synthetase (275 aa).

An ATP-binding site is contributed by 46-53 (GISGGQDS). Position 52 (Asp-52) interacts with Mg(2+). Arg-141 is a binding site for deamido-NAD(+). ATP is bound at residue Thr-161. Mg(2+) is bound at residue Glu-166. Deamido-NAD(+)-binding residues include Lys-174 and Asp-181. Residues Lys-190 and Thr-212 each coordinate ATP. 261–262 (HK) is a binding site for deamido-NAD(+).

The protein belongs to the NAD synthetase family. In terms of assembly, homodimer.

It carries out the reaction deamido-NAD(+) + NH4(+) + ATP = AMP + diphosphate + NAD(+) + H(+). The protein operates within cofactor biosynthesis; NAD(+) biosynthesis; NAD(+) from deamido-NAD(+) (ammonia route): step 1/1. In terms of biological role, catalyzes the ATP-dependent amidation of deamido-NAD to form NAD. Uses ammonia as a nitrogen source. In Limosilactobacillus reuteri (strain DSM 20016) (Lactobacillus reuteri), this protein is NH(3)-dependent NAD(+) synthetase.